We begin with the raw amino-acid sequence, 440 residues long: Adenosylhomocysteinase (440 aa).

Substrate is bound by residues Thr-47, Asp-123, and Glu-148. An NAD(+)-binding site is contributed by 149 to 151 (TTT). Substrate is bound by residues Lys-178 and Asp-182. Residues Asn-183, 228 to 233 (GFGDVG), Glu-251, 307 to 309 (IGH), and Asn-354 contribute to the NAD(+) site.

Belongs to the adenosylhomocysteinase family. It depends on NAD(+) as a cofactor.

The enzyme catalyses S-adenosyl-L-homocysteine + H2O = L-homocysteine + adenosine. Its pathway is amino-acid biosynthesis; L-homocysteine biosynthesis; L-homocysteine from S-adenosyl-L-homocysteine: step 1/1. Functionally, adenosylhomocysteine is a competitive inhibitor of S-adenosyl-L-methionine-dependent methyl transferase reactions; therefore adenosylhomocysteinase may play a key role in the control of methylations via regulation of the intracellular concentration of adenosylhomocysteine. The chain is Adenosylhomocysteinase (SAHH) from Pneumocystis carinii.